Consider the following 278-residue polypeptide: D-arabinitol 2-dehydrogenase [ribulose-forming] (278 aa).

The NADP(+) site is built by leucine 28 and asparagine 49. Serine 166 acts as the Proton donor in catalysis. Residues tyrosine 181, lysine 185, isoleucine 214, and threonine 216 each coordinate NADP(+). Tyrosine 181 serves as the catalytic Proton acceptor. The Lowers pKa of active site Tyr role is filled by lysine 185.

The protein belongs to the short-chain dehydrogenases/reductases (SDR) family.

It catalyses the reaction D-arabinitol + NAD(+) = D-ribulose + NADH + H(+). It functions in the pathway carbohydrate metabolism; D-arabinitol metabolism. This is D-arabinitol 2-dehydrogenase [ribulose-forming] (ARDH) from Scheffersomyces stipitis (strain ATCC 58785 / CBS 6054 / NBRC 10063 / NRRL Y-11545) (Yeast).